Consider the following 294-residue polypeptide: Ribosomal protein L11 methyltransferase (294 aa).

S-adenosyl-L-methionine contacts are provided by threonine 144, glycine 165, aspartate 187, and asparagine 229.

This sequence belongs to the methyltransferase superfamily. PrmA family.

It is found in the cytoplasm. The catalysed reaction is L-lysyl-[protein] + 3 S-adenosyl-L-methionine = N(6),N(6),N(6)-trimethyl-L-lysyl-[protein] + 3 S-adenosyl-L-homocysteine + 3 H(+). Methylates ribosomal protein L11. The protein is Ribosomal protein L11 methyltransferase of Cellvibrio japonicus (strain Ueda107) (Pseudomonas fluorescens subsp. cellulosa).